We begin with the raw amino-acid sequence, 344 residues long: uncharacterized protein (344 aa).

It belongs to the glycosyltransferase 2 family.

This is an uncharacterized protein from Escherichia coli (strain K12).